Reading from the N-terminus, the 400-residue chain is 1-deoxy-D-xylulose 5-phosphate reductoisomerase (400 aa).

Residues T10, G11, S12, I13, G36, N38, and N124 each coordinate NADPH. K125 provides a ligand contact to 1-deoxy-D-xylulose 5-phosphate. NADPH is bound at residue E126. D150 lines the Mn(2+) pocket. The 1-deoxy-D-xylulose 5-phosphate site is built by S151, E152, S186, and H209. Residue E152 coordinates Mn(2+). G215 lines the NADPH pocket. 1-deoxy-D-xylulose 5-phosphate contacts are provided by S222, N227, K228, and E231. E231 provides a ligand contact to Mn(2+).

It belongs to the DXR family. Requires Mg(2+) as cofactor. Mn(2+) is required as a cofactor.

It carries out the reaction 2-C-methyl-D-erythritol 4-phosphate + NADP(+) = 1-deoxy-D-xylulose 5-phosphate + NADPH + H(+). It participates in isoprenoid biosynthesis; isopentenyl diphosphate biosynthesis via DXP pathway; isopentenyl diphosphate from 1-deoxy-D-xylulose 5-phosphate: step 1/6. Catalyzes the NADPH-dependent rearrangement and reduction of 1-deoxy-D-xylulose-5-phosphate (DXP) to 2-C-methyl-D-erythritol 4-phosphate (MEP). The protein is 1-deoxy-D-xylulose 5-phosphate reductoisomerase of Aliivibrio fischeri (strain MJ11) (Vibrio fischeri).